The following is a 512-amino-acid chain: ATP synthase subunit alpha (512 aa).

169-176 serves as a coordination point for ATP; it reads GDRQTGKT.

The protein belongs to the ATPase alpha/beta chains family. As to quaternary structure, F-type ATPases have 2 components, CF(1) - the catalytic core - and CF(0) - the membrane proton channel. CF(1) has five subunits: alpha(3), beta(3), gamma(1), delta(1), epsilon(1). CF(0) has three main subunits: a(1), b(2) and c(9-12). The alpha and beta chains form an alternating ring which encloses part of the gamma chain. CF(1) is attached to CF(0) by a central stalk formed by the gamma and epsilon chains, while a peripheral stalk is formed by the delta and b chains.

Its subcellular location is the cell membrane. It carries out the reaction ATP + H2O + 4 H(+)(in) = ADP + phosphate + 5 H(+)(out). Produces ATP from ADP in the presence of a proton gradient across the membrane. The alpha chain is a regulatory subunit. The polypeptide is ATP synthase subunit alpha (Buchnera aphidicola subsp. Acyrthosiphon pisum (strain Tuc7)).